A 466-amino-acid polypeptide reads, in one-letter code: 3-isopropylmalate dehydratase large subunit (466 aa).

Residues C347, C407, and C410 each contribute to the [4Fe-4S] cluster site.

This sequence belongs to the aconitase/IPM isomerase family. LeuC type 1 subfamily. In terms of assembly, heterodimer of LeuC and LeuD. Requires [4Fe-4S] cluster as cofactor.

The enzyme catalyses (2R,3S)-3-isopropylmalate = (2S)-2-isopropylmalate. The protein operates within amino-acid biosynthesis; L-leucine biosynthesis; L-leucine from 3-methyl-2-oxobutanoate: step 2/4. Functionally, catalyzes the isomerization between 2-isopropylmalate and 3-isopropylmalate, via the formation of 2-isopropylmaleate. The chain is 3-isopropylmalate dehydratase large subunit from Shewanella woodyi (strain ATCC 51908 / MS32).